Consider the following 406-residue polypeptide: CMP-sialic acid transporter 2 (406 aa).

Topologically, residues 1-41 are cytoplasmic; it reads MKNGMAECSVCRSRLVSPSSKAISRAYDNYNYKIRVSSKQR. The chain crosses the membrane as a helical span at residues 42-62; that stretch reads ALNVFLVVGDCMLVGLQPVLV. The Lumenal segment spans residues 63–75; the sequence is YMSKVDGKFNFSP. Residues 76 to 96 form a helical membrane-spanning segment; sequence ISVNFLTEIAKVIFAMVMLLF. The Cytoplasmic segment spans residues 97–148; that stretch reads QARHQKVGEKPLLSLSTFVQAARNNMLLAVPAGLYAINNYLKFTMQLYFNPA. Residues 149-169 traverse the membrane as a helical segment; sequence TVKMLSNLKVLVIAVLLKMIM. Over 170 to 172 the chain is Lumenal; that stretch reads KRR. The helical transmembrane segment at 173-193 threads the bilayer; sequence FSIIQWEALALLLIGISINQL. Over 194 to 201 the chain is Cytoplasmic; it reads RSLPEGAT. A helical membrane pass occupies residues 202–222; sequence TVAVPIATGAYICTFIFVTVP. Residues 223–245 lie on the Lumenal side of the membrane; sequence SLASVYNEYALKSQYDTSIYLQN. Residues 246-266 traverse the membrane as a helical segment; it reads LFLYGYGAIFNFLGILGTVIY. Topologically, residues 267–282 are cytoplasmic; it reads KGPGSFDILQGHSRAT. A helical membrane pass occupies residues 283 to 303; sequence MFLILNNAAQGILSSFFFKYA. At 304-323 the chain is on the lumenal side; the sequence is DTILKKYSSTVATIFTGIAS. Residues 324–344 form a helical membrane-spanning segment; sequence AALFGHILTMNFLLGISIVFI. Residues 345–406 are Cytoplasmic-facing; it reads SMHQFFSPLS…SDDRVPLLPR (62 aa).

The protein belongs to the nucleotide-sugar transporter family. CMP-Sialate:CMP antiporter (TC 2.A.7.12) subfamily.

The protein localises to the golgi apparatus membrane. In terms of biological role, sugar transporter involved in the transport of CMP-sialic acid from the cytoplasm into the Golgi. The sequence is that of CMP-sialic acid transporter 2 from Arabidopsis thaliana (Mouse-ear cress).